The chain runs to 194 residues: Phosphoheptose isomerase (194 aa).

The 158-residue stretch at 37–194 (IANSFKQGGK…LIEFEMAKTA (158 aa)) folds into the SIS domain. 52–54 (NGG) contacts substrate. 2 residues coordinate Zn(2+): H61 and E65. Substrate is bound by residues E65, 93 to 94 (ND), 119 to 121 (STS), S124, and Q172. The Zn(2+) site is built by Q172 and H180.

It belongs to the SIS family. GmhA subfamily. Homotetramer. It depends on Zn(2+) as a cofactor.

The protein resides in the cytoplasm. It carries out the reaction 2 D-sedoheptulose 7-phosphate = D-glycero-alpha-D-manno-heptose 7-phosphate + D-glycero-beta-D-manno-heptose 7-phosphate. It participates in carbohydrate biosynthesis; D-glycero-D-manno-heptose 7-phosphate biosynthesis; D-glycero-alpha-D-manno-heptose 7-phosphate and D-glycero-beta-D-manno-heptose 7-phosphate from sedoheptulose 7-phosphate: step 1/1. It functions in the pathway bacterial outer membrane biogenesis; LOS core biosynthesis. Catalyzes the isomerization of sedoheptulose 7-phosphate in D-glycero-D-manno-heptose 7-phosphate. The chain is Phosphoheptose isomerase from Haemophilus ducreyi (strain 35000HP / ATCC 700724).